A 345-amino-acid polypeptide reads, in one-letter code: Dihydroorotase (345 aa).

Residues H13 and H15 each coordinate Zn(2+). Substrate contacts are provided by residues 15-17 (HFR) and N41. Zn(2+)-binding residues include K98, H135, and H173. Position 98 is an N6-carboxylysine (K98). H135 serves as a coordination point for substrate. Residue L218 coordinates substrate. D246 contacts Zn(2+). The active site involves D246. Substrate is bound by residues H250 and A262.

The protein belongs to the metallo-dependent hydrolases superfamily. DHOase family. Class II DHOase subfamily. As to quaternary structure, homodimer. Requires Zn(2+) as cofactor.

It carries out the reaction (S)-dihydroorotate + H2O = N-carbamoyl-L-aspartate + H(+). It functions in the pathway pyrimidine metabolism; UMP biosynthesis via de novo pathway; (S)-dihydroorotate from bicarbonate: step 3/3. Catalyzes the reversible cyclization of carbamoyl aspartate to dihydroorotate. This chain is Dihydroorotase, found in Shewanella frigidimarina (strain NCIMB 400).